The chain runs to 459 residues: ATP-dependent protease ATPase subunit HslU (459 aa).

Residues Val26, 68-73 (GVGKTE), Asp271, Glu337, and Arg409 contribute to the ATP site.

Belongs to the ClpX chaperone family. HslU subfamily. As to quaternary structure, a double ring-shaped homohexamer of HslV is capped on each side by a ring-shaped HslU homohexamer. The assembly of the HslU/HslV complex is dependent on binding of ATP.

It localises to the cytoplasm. Its function is as follows. ATPase subunit of a proteasome-like degradation complex; this subunit has chaperone activity. The binding of ATP and its subsequent hydrolysis by HslU are essential for unfolding of protein substrates subsequently hydrolyzed by HslV. HslU recognizes the N-terminal part of its protein substrates and unfolds these before they are guided to HslV for hydrolysis. This chain is ATP-dependent protease ATPase subunit HslU, found in Xylella fastidiosa (strain M12).